The sequence spans 508 residues: Cyclic AMP-responsive element-binding protein 5 (508 aa).

The C2H2-type zinc-finger motif lies at 16 to 40; the sequence is FVCSAPGCSQRFPTEDHLMIHRHKH. A Glycyl lysine isopeptide (Lys-Gly) (interchain with G-Cter in SUMO2) cross-link involves residue lysine 50. Residues threonine 59 and threonine 61 each carry the phosphothreonine modification. A Phosphoserine modification is found at serine 137. Positions 265-391 are disordered; sequence RQDQTPHHHM…LERNRAAATR (127 aa). 2 stretches are compositionally biased toward basic residues: residues 271-280 and 289-326; these read HHHMHSHPHQ and PYPH…HPAH. Over residues 337–346 the composition is skewed to polar residues; it reads TGNQAQVSPA. Residues 347-357 are compositionally biased toward low complexity; the sequence is TQQMQPTQTIQ. Residues 369–386 show a composition bias toward basic and acidic residues; the sequence is VVDEDPDERRRKFLERNR. Residues 375-438 form the bZIP domain; sequence DERRRKFLER…AQLKQLLLTH (64 aa). Positions 377–397 are basic motif; it reads RRRKFLERNRAAATRCRQKRK. The tract at residues 403–431 is leucine-zipper; sequence LEKKAEELTQTNMQLQNEVSMLKNEVAQL. The segment at 449 to 468 is disordered; it reads ESQGYLSPESSPPASPVPAC.

The protein belongs to the bZIP family. As to quaternary structure, binds DNA as a homodimer or as a heterodimer with JUN or ATF2/CREBP1.

It is found in the nucleus. In terms of biological role, binds to the cAMP response element and activates transcription. This Homo sapiens (Human) protein is Cyclic AMP-responsive element-binding protein 5 (CREB5).